The primary structure comprises 302 residues: Phosphoribosylaminoimidazole-succinocarboxamide synthase (302 aa).

Belongs to the SAICAR synthetase family.

It catalyses the reaction 5-amino-1-(5-phospho-D-ribosyl)imidazole-4-carboxylate + L-aspartate + ATP = (2S)-2-[5-amino-1-(5-phospho-beta-D-ribosyl)imidazole-4-carboxamido]succinate + ADP + phosphate + 2 H(+). The protein operates within purine metabolism; IMP biosynthesis via de novo pathway; 5-amino-1-(5-phospho-D-ribosyl)imidazole-4-carboxamide from 5-amino-1-(5-phospho-D-ribosyl)imidazole-4-carboxylate: step 1/2. This chain is Phosphoribosylaminoimidazole-succinocarboxamide synthase, found in Cupriavidus metallidurans (strain ATCC 43123 / DSM 2839 / NBRC 102507 / CH34) (Ralstonia metallidurans).